A 95-amino-acid chain; its full sequence is MEKTSLKLIFLFSLTVIAFCSSLGDAREMVKAEVNCIGGKCPEGKKNCNCMPPIAHVMDDIRPCNTDGDCYKFCPRECELGTCYCRCDYGCTCTC.

The N-terminal stretch at 1-26 (MEKTSLKLIFLFSLTVIAFCSSLGDA) is a signal peptide. 4 cysteine pairs are disulfide-bonded: Cys48-Cys95, Cys64-Cys83, Cys70-Cys91, and Cys74-Cys93.

Belongs to the DEFL family.

The protein resides in the secreted. This Arabidopsis thaliana (Mouse-ear cress) protein is Putative defensin-like protein 262.